The sequence spans 203 residues: Serine hydrolase-like protein (203 aa).

The region spanning 33–145 is the AB hydrolase-1 domain; sequence PPVLCLHGWL…FLLESDEMEN (113 aa). Residue Ser108 is part of the active site.

This sequence belongs to the AB hydrolase superfamily.

Its function is as follows. Putative serine hydrolase. This is Serine hydrolase-like protein (SERHL) from Homo sapiens (Human).